The following is an 85-amino-acid chain: Large ribosomal subunit protein bL27 (85 aa).

The disordered stretch occupies residues 1–21 (MAHKKGVGSTRNGRDSDGQRL).

It belongs to the bacterial ribosomal protein bL27 family.

The chain is Large ribosomal subunit protein bL27 from Geotalea uraniireducens (strain Rf4) (Geobacter uraniireducens).